The primary structure comprises 181 residues: Protein Syd (181 aa).

This sequence belongs to the Syd family.

Its subcellular location is the cell inner membrane. Interacts with the SecY protein in vivo. May bind preferentially to an uncomplexed state of SecY, thus functioning either as a chelating agent for excess SecY in the cell or as a regulatory factor that negatively controls the translocase function. This is Protein Syd from Klebsiella pneumoniae (strain 342).